A 143-amino-acid chain; its full sequence is MKSYMAKPEEVKRKWFVIDAEGKVLGRLASQIAKILMGKHKPTYTPHVDTGDFVIVLNAEKIVLTGNKLEDKYYKYYTGYPGGLKEVQYKKLMQTKPEFVIYHAVKGMLPKNRLGRRMIKRLKVYRGSEHKHQAQKPEKLDIE.

This sequence belongs to the universal ribosomal protein uL13 family. As to quaternary structure, part of the 50S ribosomal subunit.

Functionally, this protein is one of the early assembly proteins of the 50S ribosomal subunit, although it is not seen to bind rRNA by itself. It is important during the early stages of 50S assembly. In Thermoanaerobacter pseudethanolicus (strain ATCC 33223 / 39E) (Clostridium thermohydrosulfuricum), this protein is Large ribosomal subunit protein uL13.